The primary structure comprises 252 residues: Imidazole glycerol phosphate synthase subunit HisF (252 aa).

Residues Asp11 and Asp130 contribute to the active site.

The protein belongs to the HisA/HisF family. In terms of assembly, heterodimer of HisH and HisF.

The protein localises to the cytoplasm. The enzyme catalyses 5-[(5-phospho-1-deoxy-D-ribulos-1-ylimino)methylamino]-1-(5-phospho-beta-D-ribosyl)imidazole-4-carboxamide + L-glutamine = D-erythro-1-(imidazol-4-yl)glycerol 3-phosphate + 5-amino-1-(5-phospho-beta-D-ribosyl)imidazole-4-carboxamide + L-glutamate + H(+). The protein operates within amino-acid biosynthesis; L-histidine biosynthesis; L-histidine from 5-phospho-alpha-D-ribose 1-diphosphate: step 5/9. Functionally, IGPS catalyzes the conversion of PRFAR and glutamine to IGP, AICAR and glutamate. The HisF subunit catalyzes the cyclization activity that produces IGP and AICAR from PRFAR using the ammonia provided by the HisH subunit. The protein is Imidazole glycerol phosphate synthase subunit HisF of Bacillus cereus (strain AH820).